Here is a 518-residue protein sequence, read N- to C-terminus: Putative beta-xylosidase (518 aa).

Asp-47 functions as the Proton acceptor in the catalytic mechanism. Glu-203 functions as the Proton donor in the catalytic mechanism.

This sequence belongs to the glycosyl hydrolase 43 family.

The enzyme catalyses Hydrolysis of (1-&gt;4)-beta-D-xylans, to remove successive D-xylose residues from the non-reducing termini.. The sequence is that of Putative beta-xylosidase from Xylanibacter ruminicola (Prevotella ruminicola).